The sequence spans 440 residues: Argininosuccinate lyase (440 aa).

The protein belongs to the lyase 1 family. Argininosuccinate lyase subfamily.

The protein resides in the cytoplasm. The enzyme catalyses 2-(N(omega)-L-arginino)succinate = fumarate + L-arginine. It participates in amino-acid biosynthesis; L-arginine biosynthesis; L-arginine from L-ornithine and carbamoyl phosphate: step 3/3. This Clostridium botulinum (strain Okra / Type B1) protein is Argininosuccinate lyase.